Reading from the N-terminus, the 312-residue chain is uncharacterized protein (312 aa).

Disordered regions lie at residues 1–26 (MQKD…AMVA) and 45–106 (GNLQ…LPSG). Positions 8–17 (RFQRNKKKIN) are enriched in basic residues. Residues 68–77 (NGKRNGDKVR) show a composition bias toward basic and acidic residues. Polar residues predominate over residues 85–103 (GHSSYAGSRISGGNSNSHL).

This is an uncharacterized protein from Schizosaccharomyces pombe (strain 972 / ATCC 24843) (Fission yeast).